Here is a 79-residue protein sequence, read N- to C-terminus: Panulirin (79 aa).

An N-terminal signal peptide occupies residues 1 to 22 (MKNKAVLMLMALFLVAVTQVHG). Residues 23–26 (DPEP) constitute a propeptide that is removed on maturation. Intrachain disulfides connect cysteine 33–cysteine 63, cysteine 40–cysteine 56, and cysteine 46–cysteine 64. Positions 75 to 79 (QLLAA) are excised as a propeptide.

In terms of assembly, monomer. Post-translationally, contains 3 disulfide bonds. In terms of tissue distribution, expressed in hemocytes (at protein level).

Its function is as follows. Involved in the melanization cascade in response to lipopolysaccharide (LPS). In vitro, reversibly and competitively inhibits trypsin (Ki=8.6 nM) but not serine proteases chymotrypsin, elastase, subtilisin, thrombin and plasmin, cysteine peptidase papain or metallopeptidase carboxypeptidase A. This is Panulirin from Panulirus argus (Caribbean spiny lobster).